The sequence spans 369 residues: Aminomethyltransferase (369 aa).

This sequence belongs to the GcvT family. The glycine cleavage system is composed of four proteins: P, T, L and H.

The catalysed reaction is N(6)-[(R)-S(8)-aminomethyldihydrolipoyl]-L-lysyl-[protein] + (6S)-5,6,7,8-tetrahydrofolate = N(6)-[(R)-dihydrolipoyl]-L-lysyl-[protein] + (6R)-5,10-methylene-5,6,7,8-tetrahydrofolate + NH4(+). Its function is as follows. The glycine cleavage system catalyzes the degradation of glycine. The polypeptide is Aminomethyltransferase (Rippkaea orientalis (strain PCC 8801 / RF-1) (Cyanothece sp. (strain PCC 8801))).